Consider the following 294-residue polypeptide: 33 kDa chaperonin (294 aa).

Intrachain disulfides connect Cys-239–Cys-241 and Cys-272–Cys-275.

Belongs to the HSP33 family. Post-translationally, under oxidizing conditions two disulfide bonds are formed involving the reactive cysteines. Under reducing conditions zinc is bound to the reactive cysteines and the protein is inactive.

It is found in the cytoplasm. Redox regulated molecular chaperone. Protects both thermally unfolding and oxidatively damaged proteins from irreversible aggregation. Plays an important role in the bacterial defense system toward oxidative stress. The chain is 33 kDa chaperonin from Lacticaseibacillus paracasei (strain ATCC 334 / BCRC 17002 / CCUG 31169 / CIP 107868 / KCTC 3260 / NRRL B-441) (Lactobacillus paracasei).